The primary structure comprises 89 residues: Large ribosomal subunit protein bL27 (89 aa).

Residues 1–22 (MAHKKGASSSRNGRDSNAQRLG) are disordered. Residues 7 to 19 (ASSSRNGRDSNAQ) show a composition bias toward polar residues.

This sequence belongs to the bacterial ribosomal protein bL27 family.

This chain is Large ribosomal subunit protein bL27, found in Cutibacterium acnes (strain DSM 16379 / KPA171202) (Propionibacterium acnes).